The following is a 1449-amino-acid chain: VWFA and cache domain-containing protein CG16868 (1449 aa).

A signal peptide spans 1-23 (MWPNSNLNAVLLILAVLACPTSS). The Extracellular portion of the chain corresponds to 24 to 1220 (QHVPLAMANS…NPQREQHAYS (1197 aa)). N32, N112, N153, N407, N447, and N497 each carry an N-linked (GlcNAc...) asparagine glycan. The 222-residue stretch at 320–541 (FVLFLIDVGS…TSLPQTSSRI (222 aa)) folds into the VWFA domain. Positions 557–639 (VHPPVVDADS…PRPLIQRETS (83 aa)) constitute a Cache 1 domain. N649, N668, and N707 each carry an N-linked (GlcNAc...) asparagine glycan. Residues 889–934 (TAPYLDAGGAGYIITIAHTIFEGKAHALHSAQQDRPVAVVALDVPY) enclose the Cache 2 domain. N-linked (GlcNAc...) asparagine glycans are attached at residues N1015, N1025, N1059, and N1111. Residues 1221-1241 (AFGPLGGAIVVLVMVIGFAIY) form a helical membrane-spanning segment. Topologically, residues 1242-1449 (CYRHNLDAQT…VHRHMETAES (208 aa)) are cytoplasmic. Disordered regions lie at residues 1307 to 1339 (YHVS…SSDQ) and 1352 to 1416 (DKRH…GGSV). Low complexity predominate over residues 1359-1369 (DTMSISTSISS). Residues 1370–1392 (PTNRQQSSSQPNTHPYLSNQPTS) show a composition bias toward polar residues.

This sequence belongs to the calcium channel subunit alpha-2/delta family.

The protein resides in the membrane. This chain is VWFA and cache domain-containing protein CG16868, found in Drosophila melanogaster (Fruit fly).